The chain runs to 378 residues: O-methyltransferase dpfgI (378 aa).

S-adenosyl-L-methionine contacts are provided by residues 232–233, Asp-257, 279–280, and Arg-295; these read GG and NF. Residue His-299 is the Proton acceptor of the active site.

Belongs to the class I-like SAM-binding methyltransferase superfamily. Cation-independent O-methyltransferase family.

The protein operates within secondary metabolite biosynthesis; terpenoid biosynthesis. Its function is as follows. O-methyltransferase; part of the gene cluster that mediates the biosynthesis of diterpenoid pyrones. The first step of the pathway is the synthesis of the alpha-pyrone moiety by the polyketide synthase dpfgA via condensation of one acetyl-CoA starter unit with 3 malonyl-CoA units and 2 methylations. The alpha-pyrone is then combined with geranylgeranyl pyrophosphate (GGPP) formed by the GGPP synthase dpfgD through the action of the prenyltransferase dpfgC to yield a linear alpha-pyrone diterpenoid. Subsequent steps in the diterpenoid pyrone biosynthetic pathway involve the decalin core formation, which is initiated by the epoxidation of the C10-C11 olefin by the FAD-dependent oxidoreductase dpfgE, and is followed by a cyclization cascade catalyzed by the terpene cyclase dpfgB. The short chain dehydrogenase/reductase dpfgG then oxidizes the 8S hydroxy group to a ketone and the short chain dehydrogenase/reductase dpfgH reduces the ketone to the 8R hydroxy group to yield higginsianin B. Higginsianin B is further methylated by the methyltransferase dpfgI to produce the intermediate named FDDP B. The cytochrome P450 monooxygenase dfgpJ then catalyzes a three-step oxidation at C-27 to generate a carboxylic acid as well as C-26 hydroxylation. Finally, methyltransferase dpfgK methylates the carboxylic acid generated by dpfgJ, yielding the final diterpenoid pyrones from the pathway which were named FDDP D and FDDP E. This Gibberella zeae (strain ATCC MYA-4620 / CBS 123657 / FGSC 9075 / NRRL 31084 / PH-1) (Wheat head blight fungus) protein is O-methyltransferase dpfgI.